The sequence spans 150 residues: Cytochrome c-type biogenesis protein CcmE (150 aa).

The Cytoplasmic segment spans residues 1-7 (MTRKQKR). The helical; Signal-anchor for type II membrane protein transmembrane segment at 8-28 (LAIIGGGVGFLTAAVLLVMFA) threads the bilayer. Topologically, residues 29–150 (FSQAVAYFYV…VTLGGEENIR (122 aa)) are periplasmic. H123 and Y127 together coordinate heme.

The protein belongs to the CcmE/CycJ family.

It localises to the cell inner membrane. Heme chaperone required for the biogenesis of c-type cytochromes. Transiently binds heme delivered by CcmC and transfers the heme to apo-cytochromes in a process facilitated by CcmF and CcmH. This chain is Cytochrome c-type biogenesis protein CcmE, found in Sinorhizobium medicae (strain WSM419) (Ensifer medicae).